Reading from the N-terminus, the 427-residue chain is MSLQTLIEQATNPPESGSAASSPFSTDSFDASVMSTYGRFPLALERGAGCRVWDTQGKEYLDFVAGIATCTLGHAHPAMVEAVTRQIQKLHHVSNLYYIPEQGELAQWIIQHSCADRVFFCNSGAEANEAAIKLARKYAHTVLDIEKPIILTANASFHGRTLATITATGQAKYQKYFDPLVPGFHYVNYNDISAVEAAISELDEGDYRVAAILIEPLQGEGGVRPGDVEYFQKLRQICDDTGILLMFDEVQVGMGRSGKLWGYEYLGVEPDIFTSAKGLGGGIPIGAMMSKKFCDVFQPGEHASTFGGNPFACGVALAVCQTLERENILQNVQDRGEQLRSGLRAIAAKYPHHLTEVRGWGLINGLELAADIPLTAADVVKAAINEGLLLVPAGPKVVRFVPPLIVTEAEINTALKLLEKALATVTA.

Residues 1–23 (MSLQTLIEQATNPPESGSAASSP) are disordered. Pyridoxal 5'-phosphate-binding positions include 124–125 (GA) and Phe157. Position 160 (Arg160) interacts with N(2)-acetyl-L-ornithine. 248 to 251 (DEVQ) is a binding site for pyridoxal 5'-phosphate. The residue at position 277 (Lys277) is an N6-(pyridoxal phosphate)lysine. Ser304 is a N(2)-acetyl-L-ornithine binding site. Residue Thr305 coordinates pyridoxal 5'-phosphate.

It belongs to the class-III pyridoxal-phosphate-dependent aminotransferase family. ArgD subfamily. In terms of assembly, homodimer. Pyridoxal 5'-phosphate is required as a cofactor.

The protein localises to the cytoplasm. It catalyses the reaction N(2)-acetyl-L-ornithine + 2-oxoglutarate = N-acetyl-L-glutamate 5-semialdehyde + L-glutamate. It participates in amino-acid biosynthesis; L-arginine biosynthesis; N(2)-acetyl-L-ornithine from L-glutamate: step 4/4. The polypeptide is Acetylornithine aminotransferase (Nostoc sp. (strain PCC 7120 / SAG 25.82 / UTEX 2576)).